The primary structure comprises 380 residues: Cytochrome b (380 aa).

4 helical membrane-spanning segments follow: residues 33 to 53 (FGSL…FLAM), 77 to 98 (WLIR…YLHI), 113 to 133 (WNVG…GYVL), and 178 to 198 (FFAF…LHLL). Residues H83 and H97 each coordinate heme b. The heme b site is built by H182 and H196. Residue H201 participates in a ubiquinone binding. The next 4 helical transmembrane spans lie at 226-246 (YKDL…ALFS), 288-308 (LGGV…PILH), 320-340 (FSQI…WIGG), and 347-367 (YIII…VFFP).

Belongs to the cytochrome b family. As to quaternary structure, the cytochrome bc1 complex contains 3 respiratory subunits (MT-CYB, CYC1 and UQCRFS1), 2 core proteins (UQCRC1 and UQCRC2) and probably 6 low-molecular weight proteins. The cofactor is heme b.

The protein resides in the mitochondrion inner membrane. Its function is as follows. Component of the ubiquinol-cytochrome c reductase complex (complex III or cytochrome b-c1 complex) that is part of the mitochondrial respiratory chain. The b-c1 complex mediates electron transfer from ubiquinol to cytochrome c. Contributes to the generation of a proton gradient across the mitochondrial membrane that is then used for ATP synthesis. The polypeptide is Cytochrome b (mt-cyb) (Apogon semilineatus (Half-lined cardinal)).